The following is a 510-amino-acid chain: UDP-N-acetylmuramoyl-tripeptide--D-alanyl-D-alanine ligase (510 aa).

136-142 is an ATP binding site; the sequence is GSSGKTS.

Belongs to the MurCDEF family. MurF subfamily.

The protein resides in the cytoplasm. It catalyses the reaction D-alanyl-D-alanine + UDP-N-acetyl-alpha-D-muramoyl-L-alanyl-gamma-D-glutamyl-meso-2,6-diaminopimelate + ATP = UDP-N-acetyl-alpha-D-muramoyl-L-alanyl-gamma-D-glutamyl-meso-2,6-diaminopimeloyl-D-alanyl-D-alanine + ADP + phosphate + H(+). It functions in the pathway cell wall biogenesis; peptidoglycan biosynthesis. Its function is as follows. Involved in cell wall formation. Catalyzes the final step in the synthesis of UDP-N-acetylmuramoyl-pentapeptide, the precursor of murein. The polypeptide is UDP-N-acetylmuramoyl-tripeptide--D-alanyl-D-alanine ligase (Mycobacterium tuberculosis (strain CDC 1551 / Oshkosh)).